A 213-amino-acid polypeptide reads, in one-letter code: ATP phosphoribosyltransferase (213 aa).

The protein belongs to the ATP phosphoribosyltransferase family. Short subfamily. In terms of assembly, heteromultimer composed of HisG and HisZ subunits.

It is found in the cytoplasm. It catalyses the reaction 1-(5-phospho-beta-D-ribosyl)-ATP + diphosphate = 5-phospho-alpha-D-ribose 1-diphosphate + ATP. The protein operates within amino-acid biosynthesis; L-histidine biosynthesis; L-histidine from 5-phospho-alpha-D-ribose 1-diphosphate: step 1/9. In terms of biological role, catalyzes the condensation of ATP and 5-phosphoribose 1-diphosphate to form N'-(5'-phosphoribosyl)-ATP (PR-ATP). Has a crucial role in the pathway because the rate of histidine biosynthesis seems to be controlled primarily by regulation of HisG enzymatic activity. The polypeptide is ATP phosphoribosyltransferase (Variovorax paradoxus (strain S110)).